We begin with the raw amino-acid sequence, 434 residues long: 5-methylthioadenosine/S-adenosylhomocysteine deaminase (434 aa).

Positions 66 and 68 each coordinate Zn(2+). Substrate contacts are provided by Glu95, Arg148, and His188. His215 contacts Zn(2+). Residues Glu218 and Asp304 each coordinate substrate. Residue Asp304 participates in Zn(2+) binding.

It belongs to the metallo-dependent hydrolases superfamily. MTA/SAH deaminase family. The cofactor is Zn(2+).

It catalyses the reaction S-adenosyl-L-homocysteine + H2O + H(+) = S-inosyl-L-homocysteine + NH4(+). It carries out the reaction S-methyl-5'-thioadenosine + H2O + H(+) = S-methyl-5'-thioinosine + NH4(+). Catalyzes the deamination of 5-methylthioadenosine and S-adenosyl-L-homocysteine into 5-methylthioinosine and S-inosyl-L-homocysteine, respectively. Is also able to deaminate adenosine. This chain is 5-methylthioadenosine/S-adenosylhomocysteine deaminase, found in Shouchella clausii (strain KSM-K16) (Alkalihalobacillus clausii).